Reading from the N-terminus, the 381-residue chain is Probable serine/threonine-protein kinase PBL21 (381 aa).

A lipid anchor (S-palmitoyl cysteine) is attached at C3. One can recognise a Protein kinase domain in the interval F78–L354. Residues L84–V92 and K106 contribute to the ATP site. The Proton acceptor role is filled by D204. Positions E362–L381 are disordered.

It belongs to the protein kinase superfamily. Ser/Thr protein kinase family. Post-translationally, palmitoylation at Cys-3 and Cys-7 are required for plasma membrane location.

It localises to the cell membrane. It carries out the reaction L-seryl-[protein] + ATP = O-phospho-L-seryl-[protein] + ADP + H(+). It catalyses the reaction L-threonyl-[protein] + ATP = O-phospho-L-threonyl-[protein] + ADP + H(+). In terms of biological role, may be involved in plant defense signaling. The sequence is that of Probable serine/threonine-protein kinase PBL21 from Arabidopsis thaliana (Mouse-ear cress).